A 600-amino-acid chain; its full sequence is DNA polymerase alpha subunit B (600 aa).

Residues 112 to 167 (AYTTPSKGPHKRVSSTPETPLTKRSISTRSPHQLLSPSSFSPSATPSQKYSSRTNR) are disordered. Residues 125-140 (SSTPETPLTKRSISTR) show a composition bias toward polar residues. The residue at position 126 (S126) is a Phosphoserine. A phosphothreonine mark is found at T127 and T130. 4 positions are modified to phosphoserine: S141, S147, S152, and S154. Residues 141–158 (SPHQLLSPSSFSPSATPS) are compositionally biased toward low complexity.

The protein belongs to the DNA polymerase alpha subunit B family. As to quaternary structure, component of the alpha DNA polymerase complex (also known as the alpha DNA polymerase-primase complex) consisting of four subunits: the catalytic subunit POLA1, the regulatory subunit POLA2, and the primase complex subunits PRIM1 and PRIM2 respectively. Within the complex, POLA1 directly interacts with PRIM2. Post-translationally, phosphorylated in a cell cycle-dependent manner, in G2/M phase.

The protein resides in the nucleus. In terms of biological role, accessory subunit of the DNA polymerase alpha complex (also known as the alpha DNA polymerase-primase complex) which plays an essential role in the initiation of DNA synthesis. During the S phase of the cell cycle, the DNA polymerase alpha complex (composed of a catalytic subunit POLA1, an accessory subunit POLA2 and two primase subunits, the catalytic subunit PRIM1 and the regulatory subunit PRIM2) is recruited to DNA at the replicative forks via direct interactions with MCM10 and WDHD1. The primase subunit of the polymerase alpha complex initiates DNA synthesis by oligomerising short RNA primers on both leading and lagging strands. These primers are initially extended by the polymerase alpha catalytic subunit and subsequently transferred to polymerase delta and polymerase epsilon for processive synthesis on the lagging and leading strand, respectively. The polypeptide is DNA polymerase alpha subunit B (Pola2) (Rattus norvegicus (Rat)).